The sequence spans 122 residues: Large ribosomal subunit protein bL12 (122 aa).

This sequence belongs to the bacterial ribosomal protein bL12 family. In terms of assembly, homodimer. Part of the ribosomal stalk of the 50S ribosomal subunit. Forms a multimeric L10(L12)X complex, where L10 forms an elongated spine to which 2 to 4 L12 dimers bind in a sequential fashion. Binds GTP-bound translation factors.

Its function is as follows. Forms part of the ribosomal stalk which helps the ribosome interact with GTP-bound translation factors. Is thus essential for accurate translation. In Staphylococcus aureus (strain Newman), this protein is Large ribosomal subunit protein bL12.